A 504-amino-acid chain; its full sequence is WD repeat-containing protein 55 homolog (504 aa).

The span at 32 to 49 shows a compositional bias: acidic residues; sequence QEVVNESDSEIGEYDLGD. The segment at 32-135 is disordered; the sequence is QEVVNESDSE…NAFDMDEDDE (104 aa). The segment covering 66–76 has biased composition (polar residues); that stretch reads DSISSDGSFNP. A compositionally biased stretch (acidic residues) spans 77–95; that stretch reads NDEDSDTDSDDSMLDEPDE. Polar residues predominate over residues 114-124; the sequence is SGSSNRNQDSD. 6 WD repeats span residues 158–197, 202–241, 245–283, 286–325, 328–367, and 412–451; these read KLEDFITDICFHPERHIIALATIIGDVHLYEYSNEENKLL, VHAKACRDVEFTEDGRSLITCSKDKSVMITDMETEKLKKL, AHDDAINKLLVLDERLFASGDDSGTVKLWDFRTKDSIFE, EIEDQVTQMITNDQKKLLLATSADGYLTTFNIGARKLYVQ, PYEEELNCMGIYRGNSKLVVGTSKGRLYSYNWGYFGYHCD, and QHNMPIESMDINTNGELLASSSHNNDVRFWNVKYFEDFGD. Residues 484-504 form a disordered region; that stretch reads AKEDNNDNENDDATAGPSNTT.

This sequence belongs to the WD repeat WDR55 family.

The chain is WD repeat-containing protein 55 homolog from Drosophila willistoni (Fruit fly).